Reading from the N-terminus, the 655-residue chain is MMKFTVVAAALLLLGAVRAEEEDKKEDVGTVVGIDLGTTYSCVGVFKNGRVEIIANDQGNRITPSYVAFTPEGERLIGDAAKNQLTSNPENTVFDAKRLIGRTWNDPSVQQDIKFLPFKVVEKKTKPYIQVDIGGGQTKTFAPEEISAMVLTKMKETAEAYLGKKVTHAVVTVPAYFNDAQRQATKDAGTIAGLNVMRIINEPTAAAIAYGLDKREGEKNILVFDLGGGTFDVSLLTIDNGVFEVVATNGDTHLGGEDFDQRVMEHFIKLYKKKTGKDVRKDNRAVQKLRREVEKAKRALSSQHQARIEIESFFEGEDFSETLTRAKFEELNMDLFRSTMKPVQKVLEDSDLKKSDIDEIVLVGGSTRIPKIQQLVKEFFNGKEPSRGINPDEAVAYGAAVQAGVLSGDQDTGDLVLLDVCPLTLGIETVGGVMTKLIPRNTVVPTKKSQIFSTASDNQPTVTIKVYEGERPLTKDNHLLGTFDLTGIPPAPRGVPQIEVTFEIDVNGILRVTAEDKGTGNKNKITITNDQNRLTPEEIERMVNDAEKFAEEDKKLKERIDTRNELESYAYSLKNQIGDKEKLGGKLSSEDKETMEKAVEEKIEWLESHQDADIEDFKAKKKELEEIVQPIISKLYGSGGPPPTGEEDTSEKDEL.

The signal sequence occupies residues 1-19; sequence MMKFTVVAAALLLLGAVRA. The interval 1–81 is required for interaction with ELAPOR1; it reads MMKFTVVAAA…EGERLIGDAA (81 aa). 37 to 40 lines the ATP pocket; that stretch reads GTTY. Ser87 bears the Phosphoserine mark. An ATP-binding site is contributed by Lys97. Lys126 carries the N6-acetyllysine modification. Positions 126-281 are nucleotide-binding (NBD); that stretch reads KPYIQVDIGG…KKKTGKDVRK (156 aa). Tyr161 carries the 3'-nitrotyrosine modification. Lys214 carries the N6-acetyllysine modification. Residue 228–230 coordinates ATP; the sequence is GGT. Position 272 is an N6-acetyllysine (Lys272). 294–301 is an ATP binding site; it reads EKAKRALS. Position 327 is an N6-acetyllysine (Lys327). Lys353 participates in a covalent cross-link: Glycyl lysine isopeptide (Lys-Gly) (interchain with G-Cter in SUMO2). Lys354 is modified (N6-acetyllysine; alternate). Lys354 participates in a covalent cross-link: Glycyl lysine isopeptide (Lys-Gly) (interchain with G-Cter in SUMO1); alternate. 365–368 is an ATP binding site; that stretch reads GSTR. The tract at residues 410–420 is interdomain linker; that stretch reads QDTGDLVLLDV. Residues 421–501 form a substrate-binding (SBD) region; that stretch reads CPLTLGIETV…PRGVPQIEVT (81 aa). Lys448 carries the N6-succinyllysine modification. At Arg493 the chain carries Omega-N-methylarginine. Residue Thr519 is modified to O-AMP-threonine; alternate. Residue Thr519 is modified to Phosphothreonine; alternate. Lys586 bears the N6,N6,N6-trimethyllysine; by METTL21A; in vitro mark. Residue Lys586 is modified to N6,N6-dimethyllysine; alternate. The residue at position 586 (Lys586) is an N6-methyllysine; alternate. Lys592 carries the N6-methyllysine modification. The tract at residues 632 to 655 is disordered; it reads ISKLYGSGGPPPTGEEDTSEKDEL. Thr644 and Thr649 each carry phosphothreonine. The span at 645-655 shows a compositional bias: acidic residues; it reads GEEDTSEKDEL. A Phosphoserine modification is found at Ser650. The Prevents secretion from ER motif lies at 652-655; the sequence is KDEL.

Belongs to the heat shock protein 70 family. Monomer and homooligomer; homooligomerization via the interdomain linker inactivates the chaperone activity and acts as a storage of HSPA5/BiP molecules. Interacts with DNAJC1 (via J domain). Component of an EIF2 complex at least composed of CELF1/CUGBP1, CALR, CALR3, EIF2S1, EIF2S2, HSP90B1 and HSPA5. Part of a large chaperone multiprotein complex comprising DNAJB11, HSP90B1, HSPA5, HYOU, PDIA2, PDIA4, PDIA6, PPIB, SDF2L1, UGGT1 and very small amounts of ERP29, but not, or at very low levels, CALR nor CANX. Interacts with TMEM132A and TRIM21. May form a complex with ERLEC1, OS9, SEL1L and SYVN1. Interacts with DNAJC10. Interacts with DNAJB9/ERdj4; leading to recruit HSPA5/BiP to ERN1/IRE1. Interacts with ERN1/IRE1 (via luminal domain); the interaction takes place following interaction with DNAJB9/ERdj4 and leads to inactivate ERN1/IRE1, the interaction also competitively inhibits ERN1 interaction with MANF. Interacts directly with MANF (via SAP domain); the interaction inhibits ATP binding to HSPA5/BiP and subsequent nucleotide exchange. Interacts with ERN1 (via luminal domain); the interaction competitively inhibits ERN1 interaction with MANF. Interacts with EIF2AK3/PERK (via luminal domain); interaction leads to inactivate EIF2AK3/PERK. Interacts with MX1. Interacts with METTL23. Interacts with CEMIP; the interaction induces calcium leakage from the endoplasmic reticulum and cell migration. Interacts with PCSK4 form; the interaction takes place in the endoplasmic reticulum. Interacts with CIPC. Interacts with CCDC88B (via C-terminus); the interaction opposes ERN1-mediated JNK activation, protecting against apoptosis. Interacts with INPP5K; necessary for INPP5K localization at the endoplasmic reticulum. Interacts with MANF; the interaction is direct. Interacts with LOXL2; leading to activate the ERN1/IRE1-XBP1 pathway of the unfolded protein response. Interacts with CLU under stressed condition; interaction increases CLU protein stability; facilitates its retrotranslocation and redistribution to the mitochondria; cooperatively suppress stress-induced apoptosis by stabilizing mitochondrial membrane integrity. Interacts with CCDC47. Interacts with CLN3. Interacts with ELAPOR1; may regulate the function of HSPA5 in apoptosis and cell proliferation. Interacts with CASP7. Interacts with ILDR2; the interaction stabilizes ILDR2 expression. Interacts with ADAM7. In terms of processing, in unstressed cells, AMPylation at Thr-519 by FICD inactivates the chaperome activity: AMPylated form is locked in a relatively inert state and only weakly stimulated by J domain-containing proteins. In response to endoplasmic reticulum stress, de-AMPylation by the same protein, FICD, restores the chaperone activity. In terms of tissue distribution, expressed in sperm (at protein level).

It is found in the endoplasmic reticulum lumen. It localises to the melanosome. The protein resides in the cytoplasm. The protein localises to the cell surface. It catalyses the reaction ATP + H2O = ADP + phosphate + H(+). The chaperone activity is regulated by ATP-induced allosteric coupling of the nucleotide-binding (NBD) and substrate-binding (SBD) domains. In the ADP-bound and nucleotide-free (apo) states, the two domains have little interaction. In contrast, in the ATP-bound state the two domains are tightly coupled, which results in drastically accelerated kinetics in both binding and release of polypeptide substrates. J domain-containing co-chaperones (DNAJB9/ERdj4 or DNAJC10/ERdj5) stimulate the ATPase activity and are required for efficient substrate recognition by HSPA5/BiP. Homooligomerization inactivates participating HSPA5/BiP protomers and probably act as reservoirs to store HSPA5/BiP molecules when they are not needed by the cell. Its function is as follows. Endoplasmic reticulum chaperone that plays a key role in protein folding and quality control in the endoplasmic reticulum lumen. Involved in the correct folding of proteins and degradation of misfolded proteins via its interaction with DNAJC10/ERdj5, probably to facilitate the release of DNAJC10/ERdj5 from its substrate. Acts as a key repressor of the EIF2AK3/PERK and ERN1/IRE1-mediated unfolded protein response (UPR). In the unstressed endoplasmic reticulum, recruited by DNAJB9/ERdj4 to the luminal region of ERN1/IRE1, leading to disrupt the dimerization of ERN1/IRE1, thereby inactivating ERN1/IRE1. Also binds and inactivates EIF2AK3/PERK in unstressed cells. Accumulation of misfolded protein in the endoplasmic reticulum causes release of HSPA5/BiP from ERN1/IRE1 and EIF2AK3/PERK, allowing their homodimerization and subsequent activation. Plays an auxiliary role in post-translational transport of small presecretory proteins across endoplasmic reticulum (ER). May function as an allosteric modulator for SEC61 channel-forming translocon complex, likely cooperating with SEC62 to enable the productive insertion of these precursors into SEC61 channel. Appears to specifically regulate translocation of precursors having inhibitory residues in their mature region that weaken channel gating. May also play a role in apoptosis and cell proliferation. This chain is Endoplasmic reticulum chaperone BiP, found in Mus musculus (Mouse).